Here is a 242-residue protein sequence, read N- to C-terminus: DNA repair protein RecO (242 aa).

The protein belongs to the RecO family. Monomer.

In terms of biological role, involved in DNA repair and RecF pathway recombination. This Salmonella enteritidis PT4 (strain P125109) protein is DNA repair protein RecO.